The following is a 120-amino-acid chain: UPF0102 protein TW312 (120 aa).

This sequence belongs to the UPF0102 family.

This is UPF0102 protein TW312 from Tropheryma whipplei (strain TW08/27) (Whipple's bacillus).